The following is a 30-amino-acid chain: Cyclotide mech-1 (30 aa).

Residues 1–30 (GVIPCGESCVFIPCINKKKCSCKNKVCYRD) constitute a cross-link (cyclopeptide (Gly-Asp)). Disulfide bonds link cysteine 5–cysteine 20, cysteine 9–cysteine 22, and cysteine 14–cysteine 27.

This is a cyclic peptide. In terms of processing, contains 3 disulfide bonds.

Its function is as follows. Probably participates in a plant defense mechanism (Potential). Binds to and induces leakage in phospholipd membranes, particularly ones containing 1-palmitoyl-2-oleophosphatidylethanolamine (POPE). Not active against Gram-negative bacterium E.coli ATCC 25922 or Gram-positive bacterium S.aureus ATCC 25923 up to a concentration of 64 uM. The sequence is that of Cyclotide mech-1 from Melicytus chathamicus (Chatham Island mahoe).